The primary structure comprises 747 residues: Protein O-mannosyl-transferase 1 (747 aa).

9 helical membrane passes run 8–28, 40–60, 68–88, 99–119, 122–142, 154–174, 183–203, 206–226, and 269–289; these read PVVV…MGLL, VVFD…QIFF, FGHM…NFLW, VPVW…VPMA, IVLE…LMLI, LLES…LKFF, SLSW…AVGI, MGVF…WHLL, and LLVI…ILVF. 3 consecutive MIR domains span residues 318 to 381, 392 to 449, and 453 to 513; these read PLEV…VKDP, PRPV…LEIV, and SDTD…VEEH. N-linked (GlcNAc...) asparagine glycosylation is found at asparagine 435, asparagine 471, and asparagine 539. 3 helical membrane passes run 597–617, 636–656, and 661–681; these read IVIW…SLWY, WVLA…PFFL, and LFLY…PVVL.

The protein belongs to the glycosyltransferase 39 family. In terms of assembly, interacts with POMT2. As to expression, widely expressed. Highly expressed in testis, heart and pancreas. Detected at lower levels in kidney, skeletal muscle, brain, placenta, lung and liver.

The protein localises to the endoplasmic reticulum membrane. It carries out the reaction a di-trans,poly-cis-dolichyl beta-D-mannosyl phosphate + L-seryl-[protein] = 3-O-(alpha-D-mannosyl)-L-seryl-[protein] + a di-trans,poly-cis-dolichyl phosphate + H(+). It catalyses the reaction a di-trans,poly-cis-dolichyl beta-D-mannosyl phosphate + L-threonyl-[protein] = 3-O-(alpha-D-mannosyl)-L-threonyl-[protein] + a di-trans,poly-cis-dolichyl phosphate + H(+). It participates in protein modification; protein glycosylation. Slightly activated by Mg(2+) and inhibited by both Ca(+) and Mn(2+). EDTA ha no effect on activity in vitro. Transfers mannosyl residues to the hydroxyl group of serine or threonine residues. Coexpression of both POMT1 and POMT2 is necessary for enzyme activity, expression of either POMT1 or POMT2 alone is insufficient. Essentially dedicated to O-mannosylation of alpha-DAG1 and few other proteins but not of cadherins and protocaherins. The sequence is that of Protein O-mannosyl-transferase 1 (POMT1) from Homo sapiens (Human).